We begin with the raw amino-acid sequence, 360 residues long: Peptide chain release factor 1 (360 aa).

Gln-235 is modified (N5-methylglutamine).

Belongs to the prokaryotic/mitochondrial release factor family. In terms of processing, methylated by PrmC. Methylation increases the termination efficiency of RF1.

It is found in the cytoplasm. In terms of biological role, peptide chain release factor 1 directs the termination of translation in response to the peptide chain termination codons UAG and UAA. The polypeptide is Peptide chain release factor 1 (Janthinobacterium sp. (strain Marseille) (Minibacterium massiliensis)).